Reading from the N-terminus, the 295-residue chain is ATP synthase gamma chain (295 aa).

The protein belongs to the ATPase gamma chain family. F-type ATPases have 2 components, CF(1) - the catalytic core - and CF(0) - the membrane proton channel. CF(1) has five subunits: alpha(3), beta(3), gamma(1), delta(1), epsilon(1). CF(0) has three main subunits: a, b and c.

It is found in the cell inner membrane. Its function is as follows. Produces ATP from ADP in the presence of a proton gradient across the membrane. The gamma chain is believed to be important in regulating ATPase activity and the flow of protons through the CF(0) complex. This chain is ATP synthase gamma chain, found in Bdellovibrio bacteriovorus (strain ATCC 15356 / DSM 50701 / NCIMB 9529 / HD100).